Reading from the N-terminus, the 498-residue chain is MTDKTENSGLSSDATEVRAQKLKLLREQIGDVYPAHFHRTMTNAELAEKYQDLAPDTETQDLVTVAGRVYSSRNSGMFMDIHDASGKIQVFSHKDTTPEEARGLLPMIDLGDVIGVTGLVRRTKRGELTINAQQITMLTKSLLPMPEKYHGLADIETRYRKRYLDIMVNEESKLRFQQRSRIVSSLRRFLEDEGFMEVETPMLQPIYGGATAEPFKTHHNTLKLDMYLRIAPELYLKRVLVSGLTDKVFEINRNFRNEGVSTRHNPEFTMMECYWAYADYEDVMGLVERMFETLALAVHGTTEFEFGDKQLSFKGPFPRVSMPAAVKDATGIDFLAIKSDEEARQAARDAGVEIEKDATWGEVLAFLFEEKVEATLIQPAHVIHFPKDISPFAKEVPGEPRLVERFETYCNGWEIGNAFSELNDPVEQRARMVEQMEQAHARGEKEKTLDEDFLDAMDQGMPPAGGLGIGVDRLIMLLTNSPSIRDIILFPARRHKSD.

Residues Glu-407 and Glu-414 each coordinate Mg(2+).

It belongs to the class-II aminoacyl-tRNA synthetase family. Homodimer. The cofactor is Mg(2+).

The protein localises to the cytoplasm. The enzyme catalyses tRNA(Lys) + L-lysine + ATP = L-lysyl-tRNA(Lys) + AMP + diphosphate. The protein is Lysine--tRNA ligase of Sinorhizobium medicae (strain WSM419) (Ensifer medicae).